A 206-amino-acid polypeptide reads, in one-letter code: D-ribitol-5-phosphate phosphatase (206 aa).

The active-site Nucleophile is the D8. Mg(2+) contacts are provided by D8 and D172.

The protein belongs to the HAD-like hydrolase superfamily. Requires Mg(2+) as cofactor.

The enzyme catalyses D-ribitol 1-phosphate + H2O = ribitol + phosphate. The catalysed reaction is D-ribitol 5-phosphate + H2O = ribitol + phosphate. It carries out the reaction 5-amino-6-(5-phospho-D-ribitylamino)uracil + H2O = 5-amino-6-(D-ribitylamino)uracil + phosphate. The protein operates within cofactor biosynthesis; riboflavin biosynthesis; 5-amino-6-(D-ribitylamino)uracil from GTP: step 4/4. Its function is as follows. Catalyzes the dephosphorylation of D-ribitol-5-phosphate and D-ribitol-1-phosphate. Is also able to dephosphorylate 5-amino-6-(5-phospho-D-ribitylamino)uracil, and thus could be involved in the riboflavin biosynthesis pathway. The sequence is that of D-ribitol-5-phosphate phosphatase from Bacteroides thetaiotaomicron (strain ATCC 29148 / DSM 2079 / JCM 5827 / CCUG 10774 / NCTC 10582 / VPI-5482 / E50).